The sequence spans 171 residues: Large ribosomal subunit protein uL10 (171 aa).

It belongs to the universal ribosomal protein uL10 family. In terms of assembly, part of the ribosomal stalk of the 50S ribosomal subunit. The N-terminus interacts with L11 and the large rRNA to form the base of the stalk. The C-terminus forms an elongated spine to which L12 dimers bind in a sequential fashion forming a multimeric L10(L12)X complex.

Its function is as follows. Forms part of the ribosomal stalk, playing a central role in the interaction of the ribosome with GTP-bound translation factors. In Hyphomonas neptunium (strain ATCC 15444), this protein is Large ribosomal subunit protein uL10.